A 53-amino-acid chain; its full sequence is uncharacterized protein (53 aa).

This is an uncharacterized protein from Rickettsia conorii (strain ATCC VR-613 / Malish 7).